A 614-amino-acid polypeptide reads, in one-letter code: Glutamyl-tRNA(Gln) amidotransferase subunit E (614 aa).

This sequence belongs to the GatB/GatE family. GatE subfamily. In terms of assembly, heterodimer of GatD and GatE.

It catalyses the reaction L-glutamyl-tRNA(Gln) + L-glutamine + ATP + H2O = L-glutaminyl-tRNA(Gln) + L-glutamate + ADP + phosphate + H(+). In terms of biological role, allows the formation of correctly charged Gln-tRNA(Gln) through the transamidation of misacylated Glu-tRNA(Gln) in organisms which lack glutaminyl-tRNA synthetase. The reaction takes place in the presence of glutamine and ATP through an activated gamma-phospho-Glu-tRNA(Gln). The GatDE system is specific for glutamate and does not act on aspartate. This Methanospirillum hungatei JF-1 (strain ATCC 27890 / DSM 864 / NBRC 100397 / JF-1) protein is Glutamyl-tRNA(Gln) amidotransferase subunit E.